The primary structure comprises 262 residues: Intercellular adhesion molecule 4 (262 aa).

The signal sequence occupies residues 1–22 (MESALLLPSLLLVAAYPRGGSP). Topologically, residues 23–231 (QQEWMQSPPA…LTVLALSPAS (209 aa)) are extracellular. Ig-like C2-type domains lie at 54-116 (GGSA…TREA) and 138-209 (GHKY…LNLD). N60, N84, and N182 each carry an N-linked (GlcNAc...) asparagine glycan. 4 disulfides stabilise this stretch: C61-C105, C61-C109, C65-C109, and C145-C202. The helical transmembrane segment at 232–252 (IALASTSIATLVGILLAVGAV) threads the bilayer. The Cytoplasmic segment spans residues 253–262 (YVRKYLAVQT).

The protein belongs to the immunoglobulin superfamily. ICAM family.

The protein resides in the cell membrane. It is found in the secreted. In terms of biological role, adhesion molecule that binds to leukocyte adhesion LFA-1 protein LFA-1 (integrin alpha-L/beta-2). ICAM4 is also a ligand for alpha-4/beta-1 and alpha-V integrins. Isoform 2 may modulate binding of membrane-associated ICAM4. This is Intercellular adhesion molecule 4 (Icam4) from Mus musculus (Mouse).